The chain runs to 100 residues: Phosphoribosyl-ATP pyrophosphatase (100 aa).

It belongs to the PRA-PH family.

Its subcellular location is the cytoplasm. It carries out the reaction 1-(5-phospho-beta-D-ribosyl)-ATP + H2O = 1-(5-phospho-beta-D-ribosyl)-5'-AMP + diphosphate + H(+). It participates in amino-acid biosynthesis; L-histidine biosynthesis; L-histidine from 5-phospho-alpha-D-ribose 1-diphosphate: step 2/9. This Haloquadratum walsbyi (strain DSM 16790 / HBSQ001) protein is Phosphoribosyl-ATP pyrophosphatase.